A 240-amino-acid polypeptide reads, in one-letter code: Ribonuclease 3 (240 aa).

The region spanning 10-136 is the RNase III domain; sequence VREFQETVGV…LIGAVYLDRG (127 aa). Glutamate 49 is a binding site for Mg(2+). Aspartate 53 is a catalytic residue. 2 residues coordinate Mg(2+): aspartate 122 and glutamate 125. Glutamate 125 is a catalytic residue. A DRBM domain is found at 163–231; sequence DWKTSLQELT…AESAWKAIRA (69 aa). Positions 205-240 are disordered; the sequence is TYGSGEGRSKKEAEQQAAESAWKAIRAATEKAKQES. A compositionally biased stretch (low complexity) spans 219-228; that stretch reads QQAAESAWKA.

The protein belongs to the ribonuclease III family. Homodimer. The cofactor is Mg(2+).

It localises to the cytoplasm. The catalysed reaction is Endonucleolytic cleavage to 5'-phosphomonoester.. Functionally, digests double-stranded RNA. Involved in the processing of primary rRNA transcript to yield the immediate precursors to the large and small rRNAs (23S and 16S). Processes some mRNAs, and tRNAs when they are encoded in the rRNA operon. Processes pre-crRNA and tracrRNA of type II CRISPR loci if present in the organism. In Thermobifida fusca (strain YX), this protein is Ribonuclease 3.